The primary structure comprises 430 residues: Glial fibrillary acidic protein (430 aa).

Residues 1–69 form a head region; that stretch reads MERRRITSAR…KETRASERAE (69 aa). At Thr-7 the chain carries Phosphothreonine; by AURKB and ROCK1. Position 11 is an omega-N-methylarginine (Arg-11). Position 12 is a phosphoserine; by AURKB and ROCK1 (Ser-12). The residue at position 20 (Arg-20) is an Omega-N-methylarginine. Arg-33 bears the Citrulline mark. Residue Ser-35 is modified to Phosphoserine; by AURKB and ROCK1. Residue Thr-40 is modified to Phosphothreonine. In terms of domain architecture, IF rod spans 66–374; it reads ERAEMMELND…KLLEGEENRI (309 aa). Residues 70–101 are coil 1A; the sequence is MMELNDRFASYIEKVRFLEQQNKALAAELNQL. A Phosphoserine modification is found at Ser-79. The segment at 102-112 is linker 1; sequence RAKEPTKLADV. 2 positions are modified to phosphothreonine: Thr-107 and Thr-147. Residues 113 to 211 are coil 1B; the sequence is YQAELRELRL…EEEVRELREQ (99 aa). The tract at residues 212–227 is linker 12; it reads LAQQQVHVEMDVAKPD. A coil 2A region spans residues 228–249; that stretch reads LTAALREIRTQYEAVATSNMQE. Residues 250-253 are linker 2; it reads TEEW. The interval 254–374 is coil 2B; sequence YRSKFADLTD…KLLEGEENRI (121 aa). Ser-266 is modified (phosphoserine). Citrulline is present on Arg-267. The residue at position 320 (Ser-320) is a Phosphoserine. A tail region spans residues 375-430; that stretch reads TIPVQTFSNLQIRETSLDTKSVSEGHLKRNIVVKTVEMRDGEVIKDSKQEHKDVVM. At Thr-380 the chain carries Phosphothreonine. Residue Ser-382 is modified to Phosphoserine. Arg-403 and Arg-413 each carry citrulline.

It belongs to the intermediate filament family. Interacts with SYNM. In terms of assembly, interacts with PSEN1 (via N-terminus). Phosphorylated by PKN1. In terms of tissue distribution, brain; isoform 2 expressed at 20-fold lower level than isoform 1.

It is found in the cytoplasm. Its function is as follows. GFAP, a class-III intermediate filament, is a cell-specific marker that, during the development of the central nervous system, distinguishes astrocytes from other glial cells. This Mus musculus (Mouse) protein is Glial fibrillary acidic protein (Gfap).